Reading from the N-terminus, the 351-residue chain is Tetraacyldisaccharide 4'-kinase (351 aa).

47-54 (KAGGTGKT) contributes to the ATP binding site.

Belongs to the LpxK family.

It catalyses the reaction a lipid A disaccharide + ATP = a lipid IVA + ADP + H(+). The protein operates within glycolipid biosynthesis; lipid IV(A) biosynthesis; lipid IV(A) from (3R)-3-hydroxytetradecanoyl-[acyl-carrier-protein] and UDP-N-acetyl-alpha-D-glucosamine: step 6/6. In terms of biological role, transfers the gamma-phosphate of ATP to the 4'-position of a tetraacyldisaccharide 1-phosphate intermediate (termed DS-1-P) to form tetraacyldisaccharide 1,4'-bis-phosphate (lipid IVA). The protein is Tetraacyldisaccharide 4'-kinase of Cytophaga hutchinsonii (strain ATCC 33406 / DSM 1761 / CIP 103989 / NBRC 15051 / NCIMB 9469 / D465).